An 834-amino-acid polypeptide reads, in one-letter code: Translation factor GUF1 homolog, mitochondrial (834 aa).

Residues 1–66 (MKLCGVRGSG…RPLLAEPRRY (66 aa)) constitute a mitochondrion transit peptide. Residues 129–314 (ACIRNVSVVA…QIIDKVPPPR (186 aa)) enclose the tr-type G domain. Residues 138–145 (AHVDHGKT), 205–209 (DTPGH), and 259–262 (TKMD) each bind GTP. Residues 475–507 (ATGPPETASRTKPATAAETASSDDASGSSGSSV) form a disordered region. Residues 488–507 (ATAAETASSDDASGSSGSSV) are compositionally biased toward low complexity.

It belongs to the TRAFAC class translation factor GTPase superfamily. Classic translation factor GTPase family. LepA subfamily.

The protein resides in the mitochondrion inner membrane. The catalysed reaction is GTP + H2O = GDP + phosphate + H(+). Promotes mitochondrial protein synthesis. May act as a fidelity factor of the translation reaction, by catalyzing a one-codon backward translocation of tRNAs on improperly translocated ribosomes. Binds to mitochondrial ribosomes in a GTP-dependent manner. This Leishmania major protein is Translation factor GUF1 homolog, mitochondrial.